The sequence spans 143 residues: Large ribosomal subunit protein uL11 (143 aa).

This sequence belongs to the universal ribosomal protein uL11 family. As to quaternary structure, part of the ribosomal stalk of the 50S ribosomal subunit. Interacts with L10 and the large rRNA to form the base of the stalk. L10 forms an elongated spine to which L12 dimers bind in a sequential fashion forming a multimeric L10(L12)X complex. Post-translationally, one or more lysine residues are methylated.

Forms part of the ribosomal stalk which helps the ribosome interact with GTP-bound translation factors. This Psychrobacter sp. (strain PRwf-1) protein is Large ribosomal subunit protein uL11.